Reading from the N-terminus, the 185-residue chain is Ribosome-recycling factor (185 aa).

This sequence belongs to the RRF family.

The protein resides in the cytoplasm. Responsible for the release of ribosomes from messenger RNA at the termination of protein biosynthesis. May increase the efficiency of translation by recycling ribosomes from one round of translation to another. This chain is Ribosome-recycling factor, found in Legionella pneumophila (strain Paris).